We begin with the raw amino-acid sequence, 578 residues long: Polypeptide N-acetylgalactosaminyltransferase 4 (578 aa).

The Cytoplasmic portion of the chain corresponds to 1–12; the sequence is MAVRWTWAGKSC. A helical; Signal-anchor for type II membrane protein membrane pass occupies residues 13-35; sequence LLLALLTLAYILVEFSVSTLYAS. Over 36–578 the chain is Lumenal; that stretch reads PGAGGARELG…DKNQLWRFEK (543 aa). Cystine bridges form between Cys-124/Cys-357, Cys-348/Cys-421, Cys-457/Cys-477, Cys-503/Cys-518, and Cys-547/Cys-565. A catalytic subdomain A region spans residues 134–243; the sequence is LPTTSVIIAF…TGWLEPLLER (110 aa). Residues Asp-175 and Arg-204 each coordinate substrate. Positions 227 and 229 each coordinate Mn(2+). The interval 303–365 is catalytic subdomain B; sequence PIRSPTMAGG…PCSHVGHVFP (63 aa). Trp-334 contacts substrate. His-362 is a Mn(2+) binding site. Tyr-370 serves as a coordination point for substrate. In terms of domain architecture, Ricin B-type lectin spans 444-577; it reads WHGAIRSMGI…LDKNQLWRFE (134 aa). N-linked (GlcNAc...) asparagine glycosylation occurs at Asn-471.

Belongs to the glycosyltransferase 2 family. GalNAc-T subfamily. Requires Mn(2+) as cofactor. Highly expressed in sublingual gland, stomach, colon, small intestine and cervix. Expressed at intermediate levels in kidney, ovary, lung and uterus. Weakly expressed in spleen, liver, heart and brain. Not expressed in submandibular and parotid glands, skeletal muscle and testis.

It localises to the golgi apparatus membrane. The catalysed reaction is L-seryl-[protein] + UDP-N-acetyl-alpha-D-galactosamine = a 3-O-[N-acetyl-alpha-D-galactosaminyl]-L-seryl-[protein] + UDP + H(+). It carries out the reaction L-threonyl-[protein] + UDP-N-acetyl-alpha-D-galactosamine = a 3-O-[N-acetyl-alpha-D-galactosaminyl]-L-threonyl-[protein] + UDP + H(+). The protein operates within protein modification; protein glycosylation. Functionally, catalyzes the initial reaction in O-linked oligosaccharide biosynthesis, the transfer of an N-acetyl-D-galactosamine residue to a serine or threonine residue on the protein receptor. Has a highest activity toward EA2 peptide substrate and a much lower activity with EPO-T, Muc2, Muc1a, Muc1b. The sequence is that of Polypeptide N-acetylgalactosaminyltransferase 4 (Galnt4) from Mus musculus (Mouse).